A 203-amino-acid polypeptide reads, in one-letter code: MFDIGWTELLVIAVVLIVVVGPKDLPPMLRAFGKMTQRARKVAGDFRAQFDEALREAELDDVRQTISDAQKLNPVNSLREAMNPLRQMGNEIKADLQKATTVTENKTEVPPDAVAAPTPSMSLPETPPLVATPAPSEPVAAAVVQADTVAAKPKAVRKPRGKIADKVDAAAAVAVPVEKPKRTTAVRKPATLKKPAQTKKDEA.

A helical transmembrane segment spans residues 1-21; it reads MFDIGWTELLVIAVVLIVVVG. The disordered stretch occupies residues 179-203; that stretch reads KPKRTTAVRKPATLKKPAQTKKDEA.

Belongs to the TatB family. In terms of assembly, the Tat system comprises two distinct complexes: a TatABC complex, containing multiple copies of TatA, TatB and TatC subunits, and a separate TatA complex, containing only TatA subunits. Substrates initially bind to the TatABC complex, which probably triggers association of the separate TatA complex to form the active translocon.

It is found in the cell inner membrane. Functionally, part of the twin-arginine translocation (Tat) system that transports large folded proteins containing a characteristic twin-arginine motif in their signal peptide across membranes. Together with TatC, TatB is part of a receptor directly interacting with Tat signal peptides. TatB may form an oligomeric binding site that transiently accommodates folded Tat precursor proteins before their translocation. This Rhizobium johnstonii (strain DSM 114642 / LMG 32736 / 3841) (Rhizobium leguminosarum bv. viciae) protein is Sec-independent protein translocase protein TatB.